The chain runs to 410 residues: Peptidase T (410 aa).

The interval 11-30 is disordered; the sequence is RYAEIDTQSDPDSESTPSTE. H78 is a binding site for Zn(2+). The active site involves D80. D140 lines the Zn(2+) pocket. The active-site Proton acceptor is the E174. E175, D197, and H379 together coordinate Zn(2+).

This sequence belongs to the peptidase M20B family. Zn(2+) serves as cofactor.

The protein resides in the cytoplasm. The catalysed reaction is Release of the N-terminal residue from a tripeptide.. Functionally, cleaves the N-terminal amino acid of tripeptides. The polypeptide is Peptidase T (Staphylococcus carnosus (strain TM300)).